The primary structure comprises 164 residues: Protein PPLZ02 (164 aa).

Positions 7–64 (RYRGFRQRHWGSWVSEIRHSILKTRIWQGTFESAEDAARAYDEAARLMCGTRARTNFP) form a DNA-binding region, AP2/ERF.

It is found in the nucleus. Functionally, essential for all lupin cells independent of the respective tissue. This chain is Protein PPLZ02 (PPLZ02), found in Lupinus polyphyllus (Large-leaved lupine).